The primary structure comprises 93 residues: PqqA binding protein (93 aa).

It belongs to the PqqD family. As to quaternary structure, monomer. Interacts with PqqE.

The protein operates within cofactor biosynthesis; pyrroloquinoline quinone biosynthesis. Functions as a PqqA binding protein and presents PqqA to PqqE, in the pyrroloquinoline quinone (PQQ) biosynthetic pathway. The polypeptide is PqqA binding protein (Methylococcus capsulatus (strain ATCC 33009 / NCIMB 11132 / Bath)).